Reading from the N-terminus, the 865-residue chain is MLEEYRKHVAERAAQGIVPKPLDATQMAALVELLKTPPVGEEEFLLDLLINRVPPGVDEAAYVKAGFLAAVAKGDTTSPLVSPEKAIELLGTMQGGYNIHPLIDALDDAKLAPIAAKALSHTLLMFDNFYDVEEKAKAGNEYAKQVMQSWADAEWFLSRPPLAEKITVTVFKVTGETNTDDLSPAPDAWSRPDIPLHAQAMLKNAREGIEPDQPGVVGPIKQIEALQKKGYPLAYVGDVVGTGSSRKSATNSVLWFMGDDIPNVPNKRGGGLCLGGKIAPIFFNTMEDAGALPIEVDVSNLNMGDVIDVYPYKGEVRNHETGELLATFELKTDVLIDEVRAGGRIPLIIGRGLTTKAREALGLPHSDVFRQAKDVAESSRGFSLAQKMVGRACGVKGIRPGAYCEPKMTSVGSQDTTGPMTRDELKDLACLGFSADLVMQSFCHTAAYPKPVDVTTHHTLPDFIMNRGGVSLRPGDGVIHSWLNRMLLPDTVGTGGDSHTRFPIGISFPAGSGLVAFAAATGVMPLDMPESVLVRFKGKMQPGITLRDLVHAIPLYAIKQGLLTVEKKGKKNIFSGRILEIEGLPDLKVEQAFELTDASAERSAAGCTIKLNKEPIVEYLTSNIVLLKWMIAEGYGDRRTLERRIQGMEKWLADPQLLEADADAEYAAVIDIDLADIKEPILCAPNDPDDARLLSDVQGEKIDEVFIGSCMTNIGHFRAAGKLLDNHKGQLPTRLWVAPPTRMDAAQLTEEGYYSVFGKSGARIEIPGCSLCMGNQARVADGATVVSTSTRNFPNRLGTGANVFLASAELAAVAALIGKLPTPEEYQTYVAQVDKTAVDTYRYLNFDQLSQYTEKADGVIFQTAV.

Residues R191, 244-246 (SSR), 414-416 (QDT), and S498 contribute to the substrate site. [4Fe-4S] cluster contacts are provided by C710, C769, and C772. Substrate is bound by residues R791 and R796.

The protein belongs to the aconitase/IPM isomerase family. As to quaternary structure, monomer. [4Fe-4S] cluster is required as a cofactor.

It catalyses the reaction citrate = D-threo-isocitrate. The catalysed reaction is (2S,3R)-3-hydroxybutane-1,2,3-tricarboxylate = 2-methyl-cis-aconitate + H2O. The protein operates within carbohydrate metabolism; tricarboxylic acid cycle; isocitrate from oxaloacetate: step 2/2. It functions in the pathway organic acid metabolism; propanoate degradation. Its function is as follows. Involved in the catabolism of short chain fatty acids (SCFA) via the tricarboxylic acid (TCA)(acetyl degradation route) and the 2-methylcitrate cycle I (propionate degradation route). Catalyzes the reversible isomerization of citrate to isocitrate via cis-aconitate. Also catalyzes the hydration of 2-methyl-cis-aconitate to yield (2R,3S)-2-methylisocitrate. The apo form of AcnB functions as a RNA-binding regulatory protein which regulates FliC synthesis via interaction with the ftsH transcript to decrease the intracellular levels of FtsH. The lower levels of FtsH protease activity then influence sigma-32, DnaK and ultimately FliC production. In Salmonella typhimurium (strain LT2 / SGSC1412 / ATCC 700720), this protein is Aconitate hydratase B (acnB).